The following is a 73-amino-acid chain: Large ribosomal subunit protein bL31 (73 aa).

4 residues coordinate Zn(2+): Cys16, Cys18, Cys36, and Cys39.

The protein belongs to the bacterial ribosomal protein bL31 family. Type A subfamily. Part of the 50S ribosomal subunit. The cofactor is Zn(2+).

Functionally, binds the 23S rRNA. This chain is Large ribosomal subunit protein bL31, found in Desulfosudis oleivorans (strain DSM 6200 / JCM 39069 / Hxd3) (Desulfococcus oleovorans).